Reading from the N-terminus, the 151-residue chain is Ribonuclease H (151 aa).

In terms of domain architecture, RNase H type-1 spans 1-143; the sequence is MYKKIEIFTD…CDQLARLAAK (143 aa). Aspartate 10, glutamate 48, aspartate 70, and aspartate 135 together coordinate Mg(2+).

This sequence belongs to the RNase H family. In terms of assembly, monomer. It depends on Mg(2+) as a cofactor.

It is found in the cytoplasm. The enzyme catalyses Endonucleolytic cleavage to 5'-phosphomonoester.. Its function is as follows. Endonuclease that specifically degrades the RNA of RNA-DNA hybrids. The sequence is that of Ribonuclease H from Blochmanniella pennsylvanica (strain BPEN).